The chain runs to 259 residues: Peptide methionine sulfoxide reductase (259 aa).

Residues 66 to 90 (TRTPADASMDQSSIAQGPDDDIPAP) are disordered.

It belongs to the MsrA Met sulfoxide reductase family.

It catalyses the reaction L-methionyl-[protein] + [thioredoxin]-disulfide + H2O = L-methionyl-(S)-S-oxide-[protein] + [thioredoxin]-dithiol. The enzyme catalyses [thioredoxin]-disulfide + L-methionine + H2O = L-methionine (S)-S-oxide + [thioredoxin]-dithiol. In terms of biological role, has an important function as a repair enzyme for proteins that have been inactivated by oxidation. Catalyzes the reversible oxidation-reduction of methionine sulfoxide in proteins to methionine. This is Peptide methionine sulfoxide reductase from Lactuca sativa (Garden lettuce).